Here is a 211-residue protein sequence, read N- to C-terminus: tRNA (guanine-N(7)-)-methyltransferase (211 aa).

Residues Glu43, Asp68, Asn95, and Asn117 each coordinate S-adenosyl-L-methionine. Lys121 provides a ligand contact to substrate. Positions 123–128 are interaction with RNA; sequence RHNKRR. Residues Asp153 and 190–193 each bind substrate; that span reads TEYE.

Belongs to the class I-like SAM-binding methyltransferase superfamily. TrmB family.

The catalysed reaction is guanosine(46) in tRNA + S-adenosyl-L-methionine = N(7)-methylguanosine(46) in tRNA + S-adenosyl-L-homocysteine. The protein operates within tRNA modification; N(7)-methylguanine-tRNA biosynthesis. Catalyzes the formation of N(7)-methylguanine at position 46 (m7G46) in tRNA. The sequence is that of tRNA (guanine-N(7)-)-methyltransferase from Clostridium tetani (strain Massachusetts / E88).